The chain runs to 353 residues: Putative permease PerM (353 aa).

7 helical membrane-spanning segments follow: residues 19–39, 72–92, 156–176, 217–237, 240–260, 281–301, and 310–330; these read IALLVILVAGFGIIFFFSGLL, IVLVVFVGILLLMAFVVLPIA, LVGLLTIAVYLVLVPLMVFFL, VLEMIVVGIATWLGFLLFGLN, LLLAVLVGFSVLIPYIGAFVV, CFAVYLIIQALDGNLLVPVLF, and LVIILSVVIFGGLWGFWGVFF.

This sequence belongs to the autoinducer-2 exporter (AI-2E) (TC 2.A.86) family.

It localises to the cell membrane. This Escherichia coli O157:H7 protein is Putative permease PerM (perM).